The primary structure comprises 243 residues: Nuclear ubiquitous casein and cyclin-dependent kinase substrate 1 (243 aa).

The disordered stretch occupies residues 1–243 (MSRPVRNRKV…SEDDAQSGED (243 aa)). Residue Y13 is modified to Phosphotyrosine. Phosphoserine is present on residues S14 and S19. Y26 is modified (phosphotyrosine). Residues 35–51 (KKIRSSPREAKNKRRSG) are compositionally biased toward basic residues. Phosphoserine occurs at positions 54, 58, 61, 73, 75, and 79. Residues 64-77 (KDVKTKKDDSHSAE) show a composition bias toward basic and acidic residues. The segment covering 91–100 (QQRQAASKAA) has biased composition (low complexity). The segment covering 111–124 (VGSEEEQEEEDEAP) has biased composition (acidic residues). Phosphoserine occurs at positions 113, 130, 132, and 144. Positions 132–145 (SDEDFLVEDDDDSD) are enriched in acidic residues. A compositionally biased stretch (basic residues) spans 149 to 174 (SKKKNKKMVKKSKPERKEKKMPKPRL). At T179 the chain carries Phosphothreonine. Residue S181 is modified to Phosphoserine. Positions 197–206 (ASKEKTPSPK) are enriched in basic and acidic residues. T202 is modified (phosphothreonine). S204, S214, S223, S229, S234, and S240 each carry phosphoserine. The segment covering 232–243 (EGSEDDAQSGED) has biased composition (acidic residues).

As to quaternary structure, does not interact with RAD51. Phosphorylated in an ATM-dependent manner in response to DNA damage. Phosphorylated by CDK1 and casein kinase.

The protein resides in the nucleus. It localises to the chromosome. Its function is as follows. Chromatin-associated protein involved in DNA repair by promoting homologous recombination (HR). Binds double-stranded DNA (dsDNA) and secondary DNA structures, such as D-loop structures, but with less affinity than RAD51AP1. The sequence is that of Nuclear ubiquitous casein and cyclin-dependent kinase substrate 1 (NUCKS1) from Bos taurus (Bovine).